A 604-amino-acid polypeptide reads, in one-letter code: MADISDQNIPGHVTTGPIRGSRKIYVEGKNGVRVAMREIDLEPSANEQPVRVYDCSGPYTDPNIKIDIAAGLKPLRREWILARGDVESYEGREIKPEDNGQLGPDRSGGVPPFPNVNHHPLRAKAGANVTQMHYAKKGIVTSEMEYIAIRENCGRAQMKEAMIRDGESFGANIPDFITPEFVRDEIAEGRAVIAANINHPEAEPMIIGRNFLVKINANIGNSAVASDVAAEVEKMVWAIRWGADTVMDLSTGRNIHDTREWILRNSPVPIGTVPIYQALEKVNGIAENLTWEVFRDTLIEQAEQGVDYFTIHAGVRLAYIPLTANRITGIVSRGGSIMAKWCLAHHQENFLYTHFEDICEILKRYDIAFSLGDGLRPGCIADANDRAQFAELETLGELTKIAWKHDVQVMIEGPGHVPMHKIKPNMDKELVACHEAPFYTLGPLTTDIAPGYDHITSAIGAAMIGWYGTAMLCYVTPKEHLGLPDRDDVKVGVVTYKLAAHAADLAKGHPTAHFRDNALSRARFEFRWKDQFNLSLDPDTAESFHDQTLPAEGAKAAHFCSMCGPKFCSMKITQEVREFAAQGMEEMSDQFKEKGGEIYLPAAE.

Substrate is bound by residues asparagine 218, methionine 247, tyrosine 276, histidine 312, 332-334, 373-376, and glutamate 412; these read SRG and DGLR. A Zn(2+)-binding site is contributed by histidine 416. Tyrosine 439 is a binding site for substrate. Histidine 480 contacts Zn(2+). [4Fe-4S] cluster is bound by residues cysteine 560, cysteine 563, and cysteine 568.

This sequence belongs to the ThiC family. Homodimer. [4Fe-4S] cluster is required as a cofactor.

It carries out the reaction 5-amino-1-(5-phospho-beta-D-ribosyl)imidazole + S-adenosyl-L-methionine = 4-amino-2-methyl-5-(phosphooxymethyl)pyrimidine + CO + 5'-deoxyadenosine + formate + L-methionine + 3 H(+). Its pathway is cofactor biosynthesis; thiamine diphosphate biosynthesis. In terms of biological role, catalyzes the synthesis of the hydroxymethylpyrimidine phosphate (HMP-P) moiety of thiamine from aminoimidazole ribotide (AIR) in a radical S-adenosyl-L-methionine (SAM)-dependent reaction. The polypeptide is Phosphomethylpyrimidine synthase (Zymomonas mobilis subsp. mobilis (strain ATCC 31821 / ZM4 / CP4)).